An 815-amino-acid chain; its full sequence is Minichromosome loss protein 1 (815 aa).

WD repeat units lie at residues 11–50, 53–90, 93–132, 135–174, and 228–267; these read AHTDGLTRLAYTRDGKFLLTVGSNQVIRKFQVGSDEEPDS, NHQDPITGIAVAENYFCTCSEDATVCVYPIDSPTEHTL, RTTLPIRDVAYSVDGNWIAIASDETAVKVVSSTDSSQIFS, PAKASNKHVTYSPNGNFLAVSSCNGILYFYDTQTRELIKF, and ENHSGVTDISWSSNGMYIAASFKKGGILIWDTQSHEVVVE. Positions 306–362 are disordered; sequence LKEENDPTKPLTSSKSKNRTSKELDDLFGSDDEQSQNVNDLDGNSANEENEFINHDG. Over residues 340–352 the composition is skewed to polar residues; it reads SQNVNDLDGNSAN. The WD 6 repeat unit spans residues 517-553; the sequence is ENESPVTISLSSSVVLVCTSAGYVRVFSRQGFPISIH.

As to quaternary structure, interacts with pof3 and pol1.

The protein localises to the nucleus. Its subcellular location is the chromosome. Functionally, has a role in regulating DNA replication complexes. Acts as a regulator of post DNA replication initiation. Associates with chromatin during G1 and S phases of mitosis. Required for the transcriptional repression of the outer repeats of the centromeric region. Acts as a polymerase alpha replication accessory factor and is important for S-phase DNA damage survival. Plays a role in lagging-strand synthesis and Ozaki fragment processing, in addition to DNA repair. The protein is Minichromosome loss protein 1 (mcl1) of Schizosaccharomyces pombe (strain 972 / ATCC 24843) (Fission yeast).